Consider the following 475-residue polypeptide: NADH-quinone oxidoreductase subunit N (475 aa).

Transmembrane regions (helical) follow at residues 5 to 25 (LALP…FGVV), 32 to 52 (FLSC…LVVM), 71 to 91 (FMKI…VGYA), 99 to 119 (FEFP…ASSE), 121 to 141 (LMTL…LCAF), 155 to 175 (YFVL…LVYG), 193 to 213 (STAV…GLTF), 232 to 252 (PTSV…ALLL), 266 to 286 (WQIL…LAAI), 294 to 314 (LMAY…CAGT), 322 to 342 (LVYL…IIAM), 366 to 386 (ATAM…AGFF), 389 to 409 (MMVF…IGVV), and 439 to 459 (LSLS…LLVL).

The protein belongs to the complex I subunit 2 family. NDH-1 is composed of 14 different subunits. Subunits NuoA, H, J, K, L, M, N constitute the membrane sector of the complex.

It is found in the cell inner membrane. It catalyses the reaction a quinone + NADH + 5 H(+)(in) = a quinol + NAD(+) + 4 H(+)(out). NDH-1 shuttles electrons from NADH, via FMN and iron-sulfur (Fe-S) centers, to quinones in the respiratory chain. The immediate electron acceptor for the enzyme in this species is believed to be ubiquinone. Couples the redox reaction to proton translocation (for every two electrons transferred, four hydrogen ions are translocated across the cytoplasmic membrane), and thus conserves the redox energy in a proton gradient. In Gluconacetobacter diazotrophicus (strain ATCC 49037 / DSM 5601 / CCUG 37298 / CIP 103539 / LMG 7603 / PAl5), this protein is NADH-quinone oxidoreductase subunit N.